The chain runs to 216 residues: uncharacterized protein (216 aa).

S-adenosyl-L-methionine-binding residues include Gly56 and Glu77.

It belongs to the methyltransferase superfamily. YrrT family.

Its function is as follows. Could be a S-adenosyl-L-methionine-dependent methyltransferase. This is an uncharacterized protein from Alkaliphilus oremlandii (strain OhILAs) (Clostridium oremlandii (strain OhILAs)).